We begin with the raw amino-acid sequence, 382 residues long: Chaperone protein DnaJ (382 aa).

The J domain maps to 5–70 (DYYETLGVSR…NKRAAYDRYG (66 aa)). Residues 140–218 (GKTAQIRVPT…CHGQGRITEE (79 aa)) form a CR-type zinc finger. Positions 153, 156, 170, 173, 192, 195, 206, and 209 each coordinate Zn(2+). 4 CXXCXGXG motif repeats span residues 153 to 160 (CDVCSGSG), 170 to 177 (CGTCQGSG), 192 to 199 (CPTCHGRG), and 206 to 213 (CGKCHGQG).

Belongs to the DnaJ family. As to quaternary structure, homodimer. It depends on Zn(2+) as a cofactor.

The protein resides in the cytoplasm. Its function is as follows. Participates actively in the response to hyperosmotic and heat shock by preventing the aggregation of stress-denatured proteins and by disaggregating proteins, also in an autonomous, DnaK-independent fashion. Unfolded proteins bind initially to DnaJ; upon interaction with the DnaJ-bound protein, DnaK hydrolyzes its bound ATP, resulting in the formation of a stable complex. GrpE releases ADP from DnaK; ATP binding to DnaK triggers the release of the substrate protein, thus completing the reaction cycle. Several rounds of ATP-dependent interactions between DnaJ, DnaK and GrpE are required for fully efficient folding. Also involved, together with DnaK and GrpE, in the DNA replication of plasmids through activation of initiation proteins. This chain is Chaperone protein DnaJ, found in Rhizobium rhizogenes (strain K84 / ATCC BAA-868) (Agrobacterium radiobacter).